The chain runs to 433 residues: Protoheme IX farnesyltransferase 2 (433 aa).

Positions 1–164 (MQRFTGLVTA…LTKPRLMWLL (164 aa)) are unknown. Transmembrane regions (helical) follow at residues 4-24 (FTGL…LGVA), 35-55 (AVAH…AAAL), 67-87 (WGVT…MAVL), 95-115 (LHLF…TWHL), 160-180 (LMWL…VTGA), 184-204 (GVTI…AGTF), 236-256 (AFGV…VNPL), 257-277 (AAAL…VVLK), 282-304 (WNTV…AVAG), 308-330 (LPAL…NLAI), 357-377 (ILYW…VAGF), 378-398 (GPVY…TVVV), and 413-433 (HASN…TMVI). The interval 165-430 (CLLALSGMAL…ALLVAILVET (266 aa)) is protoheme IX prenyltransferase.

It in the C-terminal section; belongs to the UbiA prenyltransferase family. Protoheme IX farnesyltransferase subfamily.

The protein localises to the cell membrane. It catalyses the reaction heme b + (2E,6E)-farnesyl diphosphate + H2O = Fe(II)-heme o + diphosphate. It functions in the pathway porphyrin-containing compound metabolism; heme O biosynthesis; heme O from protoheme: step 1/1. Converts heme B (protoheme IX) to heme O by substitution of the vinyl group on carbon 2 of heme B porphyrin ring with a hydroxyethyl farnesyl side group. The polypeptide is Protoheme IX farnesyltransferase 2 (ctaB2) (Natronomonas pharaonis (strain ATCC 35678 / DSM 2160 / CIP 103997 / JCM 8858 / NBRC 14720 / NCIMB 2260 / Gabara) (Halobacterium pharaonis)).